Reading from the N-terminus, the 632-residue chain is Threonine--tRNA ligase (632 aa).

A TGS domain is found at 1 to 59 (MIRITFLAKQKVEEYSSRVTGFDILQPDISKEAIALRVNGELYDLSREIESDTEIDVIQ). The segment at 240–532 (DHRRIAKDMD…LIEHYAGKFP (293 aa)) is catalytic. Residues C332, H383, and H509 each coordinate Zn(2+).

It belongs to the class-II aminoacyl-tRNA synthetase family. Homodimer. Zn(2+) is required as a cofactor.

Its subcellular location is the cytoplasm. The catalysed reaction is tRNA(Thr) + L-threonine + ATP = L-threonyl-tRNA(Thr) + AMP + diphosphate + H(+). Its function is as follows. Catalyzes the attachment of threonine to tRNA(Thr) in a two-step reaction: L-threonine is first activated by ATP to form Thr-AMP and then transferred to the acceptor end of tRNA(Thr). Also edits incorrectly charged L-seryl-tRNA(Thr). This is Threonine--tRNA ligase from Wolbachia sp. subsp. Brugia malayi (strain TRS).